The following is a 237-amino-acid chain: Splicing factor U2AF 35 kDa subunit (237 aa).

At alanine 2 the chain carries N-acetylalanine. The C3H1-type 1 zinc-finger motif lies at 12–40 (EKDKVNCSFYFKIGACRHGDRCSRLHNKP). An N6-methyllysine modification is found at lysine 39. A phosphoserine mark is found at serine 61 and serine 145. The region spanning 65 to 147 (LRCAVSDVEM…QPIHAELSPV (83 aa)) is the RRM domain. Residues 149–176 (DFREACCRQYEMGECTRGGFCNFMHLKP) form a C3H1-type 2 zinc finger. Arginine 165 is subject to Omega-N-methylarginine. The segment at 185 to 237 (LYGRRRKKHRSRSRSRERRSRSRDRGRGGGGGGGGGRERDRRRSRDRERSGRF) is disordered. The segment covering 188 to 208 (RRRKKHRSRSRSRERRSRSRD) has biased composition (basic residues). Residues 220-237 (GRERDRRRSRDRERSGRF) are compositionally biased toward basic and acidic residues.

Belongs to the splicing factor SR family. In terms of assembly, identified in the spliceosome C complex. Heterodimer with U2AF2. Interacts (via RS domain) with PHF5A (via N-terminus). Interacts with ZRANB2. Interacts with SDE2. Interacts with SF3B1.

It is found in the nucleus. The protein localises to the nucleus speckle. Its function is as follows. Plays a critical role in both constitutive and enhancer-dependent splicing by mediating protein-protein interactions and protein-RNA interactions required for accurate 3'-splice site selection. Recruits U2 snRNP to the branch point. Directly mediates interactions between U2AF2 and proteins bound to the enhancers and thus may function as a bridge between U2AF2 and the enhancer complex to recruit it to the adjacent intron. This chain is Splicing factor U2AF 35 kDa subunit (U2AF1), found in Bos taurus (Bovine).